A 131-amino-acid chain; its full sequence is MTTKRKPYVRGMQPNWWTKLGFYRFYITREGTCLPQLWFSLVVLFGVFALKNGPESWAGFVGFLSNPILMLINIVTLIATVFHTATWFKLAPKAVNIVVKDEKLPQEPIVRGLWGLTIVVTVVILAVALIV.

3 consecutive transmembrane segments (helical) span residues 30–50 (EGTCLPQLWFSLVVLFGVFAL), 58–78 (AGFVGFLSNPILMLINIVTLI), and 109–129 (IVRGLWGLTIVVTVVILAVAL).

Belongs to the FrdC family. In terms of assembly, part of an enzyme complex containing four subunits: a flavoprotein (FrdA), an iron-sulfur protein (FrdB), and two hydrophobic anchor proteins (FrdC and FrdD).

The protein resides in the cell inner membrane. Functionally, two distinct, membrane-bound, FAD-containing enzymes are responsible for the catalysis of fumarate and succinate interconversion; fumarate reductase is used in anaerobic growth, and succinate dehydrogenase is used in aerobic growth. Anchors the catalytic components of the fumarate reductase complex to the cell inner membrane, binds quinones. In Proteus vulgaris, this protein is Fumarate reductase subunit C.